The sequence spans 483 residues: Dihydrolipoyllysine-residue acetyltransferase component of pyruvate dehydrogenase complex, mitochondrial (483 aa).

The N-terminal 28 residues, 1–28 (MLSANMLRRMHHGVAVTRMLLVSNGKVQ), are a transit peptide targeting the mitochondrion. Residues 53–129 (HTVINMPALS…PVGKPLAVTV (77 aa)) enclose the Lipoyl-binding domain. At Lys94 the chain carries N6-lipoyllysine. Disordered stretches follow at residues 143–187 (IEDS…DRVF) and 234–254 (EAAA…APGD). Basic and acidic residues predominate over residues 146–160 (SSAKEPSAKSGEEKS). Positions 161–178 (APSSEKQSKETSSPSNVS) are enriched in polar residues. The region spanning 187 to 224 (FASPLARKLAEEKDLDLSQIRGSGPNGRIIKVDIENFK) is the Peripheral subunit-binding (PSBD) domain. The span at 235–252 (AAAKATTPAASAADAAAP) shows a compositional bias: low complexity. Residues His456 and Asp460 contribute to the active site.

The protein belongs to the 2-oxoacid dehydrogenase family. Requires (R)-lipoate as cofactor.

The protein localises to the mitochondrion matrix. It catalyses the reaction N(6)-[(R)-dihydrolipoyl]-L-lysyl-[protein] + acetyl-CoA = N(6)-[(R)-S(8)-acetyldihydrolipoyl]-L-lysyl-[protein] + CoA. The pyruvate dehydrogenase complex catalyzes the overall conversion of pyruvate to acetyl-CoA and CO(2). It contains multiple copies of three enzymatic components: pyruvate dehydrogenase (E1), dihydrolipoamide acetyltransferase (E2) and lipoamide dehydrogenase (E3). The sequence is that of Dihydrolipoyllysine-residue acetyltransferase component of pyruvate dehydrogenase complex, mitochondrial from Schizosaccharomyces pombe (strain 972 / ATCC 24843) (Fission yeast).